Here is a 232-residue protein sequence, read N- to C-terminus: Small ribosomal subunit protein uS2 (232 aa).

It belongs to the universal ribosomal protein uS2 family.

The sequence is that of Small ribosomal subunit protein uS2 from Baumannia cicadellinicola subsp. Homalodisca coagulata.